Reading from the N-terminus, the 162-residue chain is Anaerobic nitrite reductase (162 aa).

The residue at position 2 (S2) is an N-acetylserine. One can recognise a Globin domain in the interval 9-158 (VFTEEQEALV…LVAAIKFEMK (150 aa)). A Homodimerization motif is present at residues 42-46 (EIAPS). Residues S52, K66, H70, R100, and H105 each contribute to the heme b site. Residues 112 to 124 (NEHFEVTRFALLE) carry the Homodimerization motif.

It belongs to the plant globin family. In terms of assembly, homodimer with distinct heme coordination in each subunits. Requires heme b as cofactor. As to expression, root nodules.

The protein resides in the cytoplasm. It is found in the nucleus. It carries out the reaction Fe(III)-heme b-[protein] + nitric oxide + H2O = Fe(II)-heme b-[protein] + nitrite + 2 H(+). Its function is as follows. Phytoglobin that reduces nitrite to nitric oxide (NO) under anoxic conditions (e.g. during flooding or in waterlogged soil) and upon root nodulation. Required for general plant development and during nodulation, especially for the onset of symbiosis. Monitors nitric oxide (NO) levels during early phase of the nitrogen-fixing symbiosis and buffers oxygen in functioning nodules. May not function as an oxygen storage or transport protein. Has an unusually high affinity for O(2) through a hexacoordinate heme iron because of a very low dissociation constant. This chain is Anaerobic nitrite reductase, found in Parasponia andersonii (Sponia andersonii).